A 97-amino-acid chain; its full sequence is MNVKPLGARVVIKPLEKEERTKSGIVLPDTAKEKPQQGKVIAVGPGRTLESGTKVELEVKEGDTVIFSKYAGTEVKIDGEEYIILDGERDILAIVQG.

Belongs to the GroES chaperonin family. As to quaternary structure, heptamer of 7 subunits arranged in a ring. Interacts with the chaperonin GroEL.

It is found in the cytoplasm. Functionally, together with the chaperonin GroEL, plays an essential role in assisting protein folding. The GroEL-GroES system forms a nano-cage that allows encapsulation of the non-native substrate proteins and provides a physical environment optimized to promote and accelerate protein folding. GroES binds to the apical surface of the GroEL ring, thereby capping the opening of the GroEL channel. This Symbiobacterium thermophilum (strain DSM 24528 / JCM 14929 / IAM 14863 / T) protein is Co-chaperonin GroES.